The sequence spans 154 residues: SsrA-binding protein (154 aa).

The protein belongs to the SmpB family.

Its subcellular location is the cytoplasm. In terms of biological role, required for rescue of stalled ribosomes mediated by trans-translation. Binds to transfer-messenger RNA (tmRNA), required for stable association of tmRNA with ribosomes. tmRNA and SmpB together mimic tRNA shape, replacing the anticodon stem-loop with SmpB. tmRNA is encoded by the ssrA gene; the 2 termini fold to resemble tRNA(Ala) and it encodes a 'tag peptide', a short internal open reading frame. During trans-translation Ala-aminoacylated tmRNA acts like a tRNA, entering the A-site of stalled ribosomes, displacing the stalled mRNA. The ribosome then switches to translate the ORF on the tmRNA; the nascent peptide is terminated with the 'tag peptide' encoded by the tmRNA and targeted for degradation. The ribosome is freed to recommence translation, which seems to be the essential function of trans-translation. This is SsrA-binding protein from Treponema denticola (strain ATCC 35405 / DSM 14222 / CIP 103919 / JCM 8153 / KCTC 15104).